Reading from the N-terminus, the 433-residue chain is 3-phosphoshikimate 1-carboxyvinyltransferase (433 aa).

The 3-phosphoshikimate site is built by Lys22, Ser23, and Arg27. Residue Lys22 participates in phosphoenolpyruvate binding. Phosphoenolpyruvate-binding residues include Gly95 and Arg123. 3-phosphoshikimate-binding residues include Ser167, Gln169, Asp315, and Lys342. Residue Gln169 coordinates phosphoenolpyruvate. Asp315 functions as the Proton acceptor in the catalytic mechanism. Residues Arg346 and Arg387 each contribute to the phosphoenolpyruvate site.

This sequence belongs to the EPSP synthase family. As to quaternary structure, monomer.

It is found in the cytoplasm. The enzyme catalyses 3-phosphoshikimate + phosphoenolpyruvate = 5-O-(1-carboxyvinyl)-3-phosphoshikimate + phosphate. It functions in the pathway metabolic intermediate biosynthesis; chorismate biosynthesis; chorismate from D-erythrose 4-phosphate and phosphoenolpyruvate: step 6/7. Catalyzes the transfer of the enolpyruvyl moiety of phosphoenolpyruvate (PEP) to the 5-hydroxyl of shikimate-3-phosphate (S3P) to produce enolpyruvyl shikimate-3-phosphate and inorganic phosphate. This chain is 3-phosphoshikimate 1-carboxyvinyltransferase, found in Legionella pneumophila subsp. pneumophila (strain Philadelphia 1 / ATCC 33152 / DSM 7513).